The primary structure comprises 107 residues: Small ribosomal subunit protein bS6 (107 aa).

It belongs to the bacterial ribosomal protein bS6 family.

In terms of biological role, binds together with bS18 to 16S ribosomal RNA. The protein is Small ribosomal subunit protein bS6 of Synechococcus elongatus (strain ATCC 33912 / PCC 7942 / FACHB-805) (Anacystis nidulans R2).